A 237-amino-acid polypeptide reads, in one-letter code: N-alpha-acetyltransferase 40 (237 aa).

Residue Gly2 is the site of N-myristoyl glycine attachment. The region spanning Ser63–Arg216 is the N-acetyltransferase domain. Residues Tyr85, Asp127–Glu129, and Tyr138 each bind substrate. Acetyl-CoA contacts are provided by residues Val140–Leu142 and Arg148–Lys153. Substrate is bound at residue Thr174. Asn179 serves as a coordination point for acetyl-CoA. Substrate is bound by residues Ser197 and Tyr211.

It belongs to the acetyltransferase family. NAA40 subfamily. As to expression, widely expressed; with the highest expression level in liver and the lowest expression in brain (at protein level).

It is found in the cytoplasm. The protein resides in the nucleus. The enzyme catalyses N-terminal L-seryl-[histone H4] + acetyl-CoA = N-terminal N(alpha)-acetyl-L-seryl-[histone H4] + CoA + H(+). It catalyses the reaction N-terminal L-seryl-[histone H2A] + acetyl-CoA = N-terminal N(alpha)-acetyl-L-seryl-[histone H2A] + CoA + H(+). Its function is as follows. N-alpha-acetyltransferase that specifically mediates the acetylation of the N-terminal residues of histones H4 and H2A. In contrast to other N-alpha-acetyltransferase, has a very specific selectivity for histones H4 and H2A N-terminus and specifically recognizes the 'Ser-Gly-Arg-Gly sequence'. Acts as a negative regulator of apoptosis. May play a role in hepatic lipid metabolism. The protein is N-alpha-acetyltransferase 40 of Homo sapiens (Human).